A 299-amino-acid polypeptide reads, in one-letter code: Inosose dehydratase (299 aa).

This sequence belongs to the IolE/MocC family. Glutathione serves as cofactor. Requires Co(2+) as cofactor. It depends on Mn(2+) as a cofactor.

It carries out the reaction scyllo-inosose = 3D-3,5/4-trihydroxycyclohexane-1,2-dione + H2O. In terms of biological role, catalyzes the dehydration of inosose (2-keto-myo-inositol, 2KMI or 2,4,6/3,5-pentahydroxycyclohexanone) to 3D-(3,5/4)-trihydroxycyclohexane-1,2-dione (D-2,3-diketo-4-deoxy-epi-inositol). The sequence is that of Inosose dehydratase from Klebsiella pneumoniae subsp. pneumoniae (strain ATCC 700721 / MGH 78578).